We begin with the raw amino-acid sequence, 515 residues long: Maturase K (515 aa).

It belongs to the intron maturase 2 family. MatK subfamily.

The protein localises to the plastid. It localises to the chloroplast. Its function is as follows. Usually encoded in the trnK tRNA gene intron. Probably assists in splicing its own and other chloroplast group II introns. The sequence is that of Maturase K from Trillium luteum (Yellow wakerobin).